Here is a 286-residue protein sequence, read N- to C-terminus: Ribosomal RNA small subunit methyltransferase A (286 aa).

S-adenosyl-L-methionine is bound by residues histidine 11, leucine 13, glycine 44, glutamate 65, aspartate 90, and asparagine 115.

This sequence belongs to the class I-like SAM-binding methyltransferase superfamily. rRNA adenine N(6)-methyltransferase family. RsmA subfamily.

The protein resides in the cytoplasm. The enzyme catalyses adenosine(1518)/adenosine(1519) in 16S rRNA + 4 S-adenosyl-L-methionine = N(6)-dimethyladenosine(1518)/N(6)-dimethyladenosine(1519) in 16S rRNA + 4 S-adenosyl-L-homocysteine + 4 H(+). Specifically dimethylates two adjacent adenosines (A1518 and A1519) in the loop of a conserved hairpin near the 3'-end of 16S rRNA in the 30S particle. May play a critical role in biogenesis of 30S subunits. This Nostoc punctiforme (strain ATCC 29133 / PCC 73102) protein is Ribosomal RNA small subunit methyltransferase A.